Consider the following 337-residue polypeptide: MISLKSIVDKLYNLEDLSYQESYQLFDYFIKGQIELPLQTSILTALKLKKETSIEIASAVEALLDNTKEFPKIKGDLAGIVGTGGDGFNTINISTTAAIVAATAGYKVAKHGGRSVSSKSGSFDLLESFGVNIELAPDQTKQCLELYNLGFLFAPFYSEGFRYIREARAILKTRTIFNILGPLINPARPNKVVIGVYSKDLILPMAKTLVNLGIDRAAVVYGSGLDEVAIHDGTYVAEIQNSQITEYKVSPADFGIDTYAIKDLEGGLPEQNREIIKQILLGKGKEAHNAAVAVNVAMLMKLYDKDDLKQNTQEVLEIIKSGKCFNTLQQVINYSNK.

Residues glycine 82, glycine 85 to aspartate 86, threonine 90, asparagine 92 to threonine 95, lysine 110 to serine 118, and serine 122 each bind 5-phospho-alpha-D-ribose 1-diphosphate. Glycine 82 lines the anthranilate pocket. Serine 94 provides a ligand contact to Mg(2+). Residue arginine 168 participates in anthranilate binding. Residues aspartate 226 and glutamate 227 each contribute to the Mg(2+) site.

It belongs to the anthranilate phosphoribosyltransferase family. In terms of assembly, homodimer. Mg(2+) is required as a cofactor.

The catalysed reaction is N-(5-phospho-beta-D-ribosyl)anthranilate + diphosphate = 5-phospho-alpha-D-ribose 1-diphosphate + anthranilate. Its pathway is amino-acid biosynthesis; L-tryptophan biosynthesis; L-tryptophan from chorismate: step 2/5. Its function is as follows. Catalyzes the transfer of the phosphoribosyl group of 5-phosphorylribose-1-pyrophosphate (PRPP) to anthranilate to yield N-(5'-phosphoribosyl)-anthranilate (PRA). The chain is Anthranilate phosphoribosyltransferase from Francisella tularensis subsp. novicida (strain U112).